A 66-amino-acid chain; its full sequence is Large ribosomal subunit protein bL31 (66 aa).

Zn(2+) contacts are provided by Cys16, Cys18, Cys36, and Cys39.

The protein belongs to the bacterial ribosomal protein bL31 family. Type A subfamily. In terms of assembly, part of the 50S ribosomal subunit during exponential growth. Requires Zn(2+) as cofactor.

Binds the 23S rRNA. In terms of biological role, while neither of the L31 paralogs is essential, this protein seems to function as the main L31 protein. Has a lower affinity for 70S ribosomes than the non-zinc-containing paralog L31B (ytiA); is displaced by it to varying extents, even under zinc-replete conditions. The polypeptide is Large ribosomal subunit protein bL31 (rpmE) (Bacillus subtilis (strain 168)).